A 456-amino-acid polypeptide reads, in one-letter code: Aromatic amino acid transport protein AroP (456 aa).

Residues 1–18 (MEGQQHGEQLKRGLKNRH) are Cytoplasmic-facing. Residues 19-39 (IQLIALGGAIGTGLFLGSASV) traverse the membrane as a helical segment. Residues 40 to 41 (IQ) lie on the Periplasmic side of the membrane. Residues 42–62 (SAGPGIILGYAIAGFIAFLIM) traverse the membrane as a helical segment. Over 63–85 (RQLGEMVVEEPVAGSFSHFAYKY) the chain is Cytoplasmic. Residues 86–106 (WGSFAGFASGWNYWVLYVLVA) traverse the membrane as a helical segment. Topologically, residues 107–116 (MAELTAVGKY) are periplasmic. A helical membrane pass occupies residues 117–137 (IQFWYPEIPTWVSAAVFFVVI). Residues 138–154 (NAINLTNVKVFGEMEFW) are Cytoplasmic-facing. The helical transmembrane segment at 155–175 (FAIIKVIAVVAMIIFGAWLLF) threads the bilayer. Over 176-200 (SGNGGPQASVSNLWDQGGFLPHGFT) the chain is Periplasmic. The chain crosses the membrane as a helical span at residues 201 to 221 (GLVMMMAIIMFSFGGLELVGI). Over 222–239 (TAAEADNPEQSIPKATNQ) the chain is Cytoplasmic. The chain crosses the membrane as a helical span at residues 240 to 260 (VIYRILIFYIGSLAVLLSLMP). Topologically, residues 261–270 (WTRVTADTSP) are periplasmic. Residues 271 to 291 (FVLIFHELGDTFVANALNIVV) traverse the membrane as a helical segment. The Cytoplasmic segment spans residues 292–332 (LTAALSVYNSCVYCNSRMLFGLAQQGNAPKALASVDKRGVP). The chain crosses the membrane as a helical span at residues 333–353 (VNTILVSALVTALCVLINYLA). The Periplasmic portion of the chain corresponds to 354-357 (PESA). A helical membrane pass occupies residues 358 to 378 (FGLLMALVVSALVINWAMISL). At 379 to 398 (AHMKFRRAKQEQGVVTRFPA) the chain is on the cytoplasmic side. Residues 399–419 (LLYPLGNWICLLFMAAVLVIM) traverse the membrane as a helical segment. Residues 420–424 (LMTPG) lie on the Periplasmic side of the membrane. The helical transmembrane segment at 425 to 445 (MAISVYLIPVWLIVLGIGYLF) threads the bilayer. Over 446 to 456 (KEKTAKAVKAH) the chain is Cytoplasmic.

It belongs to the amino acid-polyamine-organocation (APC) superfamily. Amino acid transporter (AAT) (TC 2.A.3.1) family.

Its subcellular location is the cell inner membrane. It carries out the reaction L-phenylalanine(in) + H(+)(in) = L-phenylalanine(out) + H(+)(out). The catalysed reaction is L-tryptophan(in) + H(+)(in) = L-tryptophan(out) + H(+)(out). It catalyses the reaction L-tyrosine(in) + H(+)(in) = L-tyrosine(out) + H(+)(out). In terms of biological role, permease that is involved in the active transport across the cytoplasmic membrane of all three aromatic amino acids, phenylalanine, tyrosine and tryptophan. In Escherichia coli O6:H1 (strain CFT073 / ATCC 700928 / UPEC), this protein is Aromatic amino acid transport protein AroP (aroP).